Reading from the N-terminus, the 354-residue chain is Protein C42 (354 aa).

The short motif at 349–352 is the Nuclear localization signal element; the sequence is KRKK.

The protein belongs to the baculoviridae C42 protein family.

It localises to the host nucleus. This chain is Protein C42, found in Orgyia pseudotsugata (Douglas-fir tussock moth).